A 1024-amino-acid polypeptide reads, in one-letter code: Isoleucine--tRNA ligase (1024 aa).

The 'HIGH' region motif lies at 52–62; that stretch reads PTANGRPHVGH. The 'KMSKS' region motif lies at 590–594; it reads KMSKS. Position 593 (Lys-593) interacts with ATP.

This sequence belongs to the class-I aminoacyl-tRNA synthetase family. IleS type 2 subfamily. As to quaternary structure, monomer. It depends on Zn(2+) as a cofactor.

It localises to the cytoplasm. It catalyses the reaction tRNA(Ile) + L-isoleucine + ATP = L-isoleucyl-tRNA(Ile) + AMP + diphosphate. Functionally, catalyzes the attachment of isoleucine to tRNA(Ile). As IleRS can inadvertently accommodate and process structurally similar amino acids such as valine, to avoid such errors it has two additional distinct tRNA(Ile)-dependent editing activities. One activity is designated as 'pretransfer' editing and involves the hydrolysis of activated Val-AMP. The other activity is designated 'posttransfer' editing and involves deacylation of mischarged Val-tRNA(Ile). The chain is Isoleucine--tRNA ligase from Picrophilus torridus (strain ATCC 700027 / DSM 9790 / JCM 10055 / NBRC 100828 / KAW 2/3).